Consider the following 634-residue polypeptide: Pentatricopeptide repeat-containing protein At5g14080 (634 aa).

13 PPR repeats span residues 81-115 (DSIS…KILL), 116-150 (DSSV…GQEI), 151-185 (HPDV…GVSL), 186-220 (NTLG…NLNI), 222-256 (GSII…DCKP), 257-291 (DFMA…GVAP), 292-326 (RSSD…KFPM), 327-360 (DNDI…GKLP), 361-395 (AIRT…GYFS), 396-430 (ELQS…GLAP), 431-465 (DVSL…GCKM), 466-500 (NLTT…GIEP), and 501-535 (DETI…DHKT).

It belongs to the PPR family. P subfamily.

This is Pentatricopeptide repeat-containing protein At5g14080 from Arabidopsis thaliana (Mouse-ear cress).